The primary structure comprises 400 residues: Transmembrane protein 43 (400 aa).

The residue at position 2 (A2) is an N-acetylalanine. Topologically, residues 2–31 are nuclear; that stretch reads AANYSSTSSRKEHVKVTSEPQPGFLERLSE. A helical transmembrane segment spans residues 32–52; the sequence is TSGGMFVGLMTFLLSFYLIFT. Residues 53 to 313 lie on the Perinuclear space side of the membrane; the sequence is NEGRALKTAT…NSMKTWGLRA (261 aa). A helical transmembrane segment spans residues 314-334; sequence AGWMAMFMGLNLMTRILYTLV. Topologically, residues 335-345 are nuclear; it reads DWFPVFRDLVN. A helical membrane pass occupies residues 346–366; the sequence is IGLKAFAFCVATSLTLLTVAA. The Perinuclear space portion of the chain corresponds to 367–368; sequence GW. A helical transmembrane segment spans residues 369 to 389; it reads LFYRPLWAALIGCLALVPIII. Residues 390-400 lie on the Nuclear side of the membrane; it reads ARTRVPAKKLE.

Belongs to the TMEM43 family. In terms of assembly, can form oligomers through the transmembrane domains. Interacts with EMD; the interaction retains EMD at the inner nuclear membrane. Interacts with LMNA and LMNB2. Interacts with SUN2. Interacts with RNF26; this interaction is important to modulate innate immune signaling through the cGAS-STING pathway. Interacts with CARD10. Interacts with gap junctions proteins GJB2/Cx26 and GJB4/Cx30. Widely expressed, including in the cochlea, heart, eye, brain and kidney.

It is found in the endoplasmic reticulum membrane. The protein resides in the nucleus inner membrane. Its subcellular location is the cell membrane. Its function is as follows. May have an important role in maintaining nuclear envelope structure by organizing protein complexes at the inner nuclear membrane. Required for retaining emerin at the inner nuclear membrane. Plays a role in the modulation of innate immune signaling through the cGAS-STING pathway by interacting with RNF26. In addition, functions as a critical signaling component in mediating NF-kappa-B activation by acting downstream of EGFR and upstream of CARD10. Contributes to passive conductance current in cochlear glia-like supporting cells, mediated by gap junctions and necessary for hearing. The polypeptide is Transmembrane protein 43 (Tmem43) (Mus musculus (Mouse)).